The following is a 141-amino-acid chain: Nucleoside diphosphate kinase (141 aa).

ATP is bound by residues lysine 11, phenylalanine 59, arginine 87, threonine 93, arginine 104, and asparagine 114. Catalysis depends on histidine 117, which acts as the Pros-phosphohistidine intermediate.

The protein belongs to the NDK family. In terms of assembly, homotetramer. The cofactor is Mg(2+).

The protein localises to the cytoplasm. It carries out the reaction a 2'-deoxyribonucleoside 5'-diphosphate + ATP = a 2'-deoxyribonucleoside 5'-triphosphate + ADP. It catalyses the reaction a ribonucleoside 5'-diphosphate + ATP = a ribonucleoside 5'-triphosphate + ADP. In terms of biological role, major role in the synthesis of nucleoside triphosphates other than ATP. The ATP gamma phosphate is transferred to the NDP beta phosphate via a ping-pong mechanism, using a phosphorylated active-site intermediate. The sequence is that of Nucleoside diphosphate kinase from Nitrosospira multiformis (strain ATCC 25196 / NCIMB 11849 / C 71).